The sequence spans 938 residues: Isoleucine--tRNA ligase (938 aa).

The 'HIGH' region motif lies at Pro58 to His68. The residue at position 183 (Lys183) is an N6-acetyllysine. Glu561 contributes to the L-isoleucyl-5'-AMP binding site. The short motif at Lys602–Ser606 is the 'KMSKS' region element. Lys605 contributes to the ATP binding site. Zn(2+)-binding residues include Cys901, Cys904, Cys921, and Cys924.

Belongs to the class-I aminoacyl-tRNA synthetase family. IleS type 1 subfamily. Monomer. The cofactor is Zn(2+).

The protein localises to the cytoplasm. The catalysed reaction is tRNA(Ile) + L-isoleucine + ATP = L-isoleucyl-tRNA(Ile) + AMP + diphosphate. In terms of biological role, catalyzes the attachment of isoleucine to tRNA(Ile). As IleRS can inadvertently accommodate and process structurally similar amino acids such as valine, to avoid such errors it has two additional distinct tRNA(Ile)-dependent editing activities. One activity is designated as 'pretransfer' editing and involves the hydrolysis of activated Val-AMP. The other activity is designated 'posttransfer' editing and involves deacylation of mischarged Val-tRNA(Ile). In Escherichia coli O127:H6 (strain E2348/69 / EPEC), this protein is Isoleucine--tRNA ligase.